The sequence spans 129 residues: Large ribosomal subunit protein bL17 (129 aa).

The protein belongs to the bacterial ribosomal protein bL17 family. Part of the 50S ribosomal subunit. Contacts protein L32.

The chain is Large ribosomal subunit protein bL17 from Actinobacillus succinogenes (strain ATCC 55618 / DSM 22257 / CCUG 43843 / 130Z).